Here is a 651-residue protein sequence, read N- to C-terminus: Mediator of RNA polymerase II transcription subunit 17 (651 aa).

The segment at 51–83 (QGSGSEEEEAAGAEGDAQDWAGAGSSADQDDEE) is disordered. Low complexity predominate over residues 62 to 74 (GAEGDAQDWAGAG).

Belongs to the Mediator complex subunit 17 family. In terms of assembly, component of the Mediator complex, which is composed of MED1, MED4, MED6, MED7, MED8, MED9, MED10, MED11, MED12, MED13, MED13L, MED14, MED15, MED16, MED17, MED18, MED19, MED20, MED21, MED22, MED23, MED24, MED25, MED26, MED27, MED29, MED30, MED31, CCNC, CDK8 and CDC2L6/CDK11. The MED12, MED13, CCNC and CDK8 subunits form a distinct module termed the CDK8 module. Mediator containing the CDK8 module is less active than Mediator lacking this module in supporting transcriptional activation. Individual preparations of the Mediator complex lacking one or more distinct subunits have been variously termed ARC, CRSP, DRIP, PC2, SMCC and TRAP. Interacts with GATA1, PPARG and STAT2.

The protein localises to the nucleus. Functionally, component of the Mediator complex, a coactivator involved in the regulated transcription of nearly all RNA polymerase II-dependent genes. Mediator functions as a bridge to convey information from gene-specific regulatory proteins to the basal RNA polymerase II transcription machinery. Mediator is recruited to promoters by direct interactions with regulatory proteins and serves as a scaffold for the assembly of a functional preinitiation complex with RNA polymerase II and the general transcription factors. The protein is Mediator of RNA polymerase II transcription subunit 17 (MED17) of Bos taurus (Bovine).